Here is a 424-residue protein sequence, read N- to C-terminus: Tubulin gamma chain, nucleomorph (424 aa).

GTP is bound at residue 137-143 (NGGTGAG).

The protein belongs to the tubulin family.

Functionally, tubulin is the major constituent of microtubules. The gamma chain is found at microtubule organizing centers (MTOC) such as the spindle poles or the centrosome, suggesting that it is involved in the minus-end nucleation of microtubule assembly. This is Tubulin gamma chain, nucleomorph (tubG) from Guillardia theta (Cryptophyte).